A 396-amino-acid polypeptide reads, in one-letter code: Elongation factor Tu 1 (396 aa).

The 197-residue stretch at 10 to 206 (KPHCNIGTIG…TVDDYIPQPD (197 aa)) folds into the tr-type G domain. Residues 19 to 26 (GHVDHGKT) are G1. A GTP-binding site is contributed by 19–26 (GHVDHGKT). Residue threonine 26 participates in Mg(2+) binding. The tract at residues 60 to 64 (GITIN) is G2. A G3 region spans residues 81–84 (DCPG). GTP contacts are provided by residues 81–85 (DCPGH) and 136–139 (NKVD). The tract at residues 136–139 (NKVD) is G4. The interval 174 to 176 (SAK) is G5.

It belongs to the TRAFAC class translation factor GTPase superfamily. Classic translation factor GTPase family. EF-Tu/EF-1A subfamily. Monomer.

The protein localises to the cytoplasm. The enzyme catalyses GTP + H2O = GDP + phosphate + H(+). GTP hydrolase that promotes the GTP-dependent binding of aminoacyl-tRNA to the A-site of ribosomes during protein biosynthesis. This Caulobacter sp. (strain K31) protein is Elongation factor Tu 1.